The primary structure comprises 105 residues: Cell division protein FtsB (105 aa).

Residues 1–3 lie on the Cytoplasmic side of the membrane; it reads MRL. The chain crosses the membrane as a helical span at residues 4-21; sequence FTLILMVVLALVQRQLWF. The Periplasmic portion of the chain corresponds to 22–105; the sequence is GKNGLVEYRQ…NKQSSLPKSD (84 aa). Residues 28–74 are a coiled coil; it reads EYRQVSENLLRRQADNQKLQERNMLLKEDIEDLKSGLEAIEELARND.

The protein belongs to the FtsB family. Part of a complex composed of FtsB, FtsL and FtsQ.

The protein resides in the cell inner membrane. In terms of biological role, essential cell division protein. May link together the upstream cell division proteins, which are predominantly cytoplasmic, with the downstream cell division proteins, which are predominantly periplasmic. The chain is Cell division protein FtsB from Tolumonas auensis (strain DSM 9187 / NBRC 110442 / TA 4).